The chain runs to 491 residues: Polybrominated aromatic compounds synthase (491 aa).

C437 is a binding site for heme.

Belongs to the cytochrome P450 family. Heme is required as a cofactor.

Its function is as follows. Cytochrome P450 protein involved in the biosynthesis of polybrominated aromatic organic compounds. In the presence of ferredoxin, ferredoxin reductase and NADH, catalyzes the coupling of bromophenols and bromopyrroles, forming various polybrominated biphenyls and hydroxylated polybrominated diphenyl ethers (OH-BDE). Can also mediate the heterocoupling of 3,5-dibromocatechol. Can also use chlorinated phenolic substrates. 2,3,4-tribromopyrrole could be the physiological substrate. The polypeptide is Polybrominated aromatic compounds synthase (Pseudoalteromonas luteoviolacea (strain 2ta16)).